Here is a 223-residue protein sequence, read N- to C-terminus: MAMLFRPPPSQCRSFSPFVFNYSSREVSSSSRLSLKTSGDEENWVSRFRSKSLSLVFSGALALGLSLSGVGFADAKVGVNKPELLPKEFTSVIDVADFLSNGQEKRIAQEIANLEKDTGFKLRVLAQNYPVTPGLAIKDFWQVDDSTIVFVADPTFGNILNFNVGATVDLDIPRSFWSRLAGKYGNMFYWKEKGEDASIEAAVMAISSCLREPVGRNNCAEIQ.

The protein localises to the plastid. It localises to the chloroplast thylakoid lumen. The polypeptide is Thylakoid lumenal 15.0 kDa protein 2, chloroplastic (Arabidopsis thaliana (Mouse-ear cress)).